Consider the following 117-residue polypeptide: Large ribosomal subunit protein eL34 (117 aa).

Belongs to the eukaryotic ribosomal protein eL34 family. In terms of assembly, component of the large ribosomal subunit.

It is found in the cytoplasm. The protein resides in the cytosol. It localises to the endoplasmic reticulum. In terms of biological role, component of the large ribosomal subunit. The ribosome is a large ribonucleoprotein complex responsible for the synthesis of proteins in the cell. The polypeptide is Large ribosomal subunit protein eL34 (rpl34) (Ictalurus punctatus (Channel catfish)).